The chain runs to 521 residues: 7-deoxyloganic acid hydroxylase (521 aa).

The helical transmembrane segment at Ile-8–Val-28 threads the bilayer. N-linked (GlcNAc...) asparagine glycosylation is found at Asn-107 and Asn-311. A heme-binding site is contributed by Cys-469.

The protein belongs to the cytochrome P450 family. Mostly present in actively growing aerial organs, including leaves, flower buds and stems, and, to a lower extent, in mature leaves, roots and opened flowers. Expressed in the leaf internal phloem-associated parenchyma (IPAP) inside the mesophyll.

Its subcellular location is the endoplasmic reticulum membrane. The catalysed reaction is 7-deoxyloganate + reduced [NADPH--hemoprotein reductase] + O2 = loganate + oxidized [NADPH--hemoprotein reductase] + H2O + H(+). The protein operates within alkaloid biosynthesis. Functionally, component of the seco-iridoid and derivatives monoterpenoid indole alkaloids (MIAs, e.g. vincristine, quinine, and strychnine) biosynthesis pathway. Catalyzes the conversion of 7-deoxyloganic acid into loganic acid. Not active on 7-deoxyloganetic acid. The sequence is that of 7-deoxyloganic acid hydroxylase from Catharanthus roseus (Madagascar periwinkle).